We begin with the raw amino-acid sequence, 276 residues long: Casein kinase II subunit beta-3 (276 aa).

Disordered stretches follow at residues M1–A22 and K34–D86.

The protein belongs to the casein kinase 2 subunit beta family. In terms of assembly, heterotetramer of two catalytic alpha subunits and two regulatory beta subunits. Interacts with CCA1. Interacts with LHY. Phosphorylated by alpha subunit.

It is found in the cytoplasm. Its subcellular location is the cytosol. It localises to the nucleus. Functionally, plays a complex role in regulating the basal catalytic activity of the alpha subunit. The tetrameric holoenzyme CK2, composed of two alpha and two beta subunits, phosphorylates the transcription factor PIF1 after an exposure to light, resulting in a proteasome-dependent degradation of PIF1 and promotion of photomorphogenesis. CK2 phosphorylates translation initiation factors. May participate in the regulation of the initiation of translation. Stimulates the binding of CCA1 to promoters. This Arabidopsis thaliana (Mouse-ear cress) protein is Casein kinase II subunit beta-3 (CKB3).